A 305-amino-acid chain; its full sequence is Ribonuclease BN (305 aa).

Zn(2+) contacts are provided by histidine 64, histidine 66, aspartate 68, histidine 69, histidine 141, aspartate 212, and histidine 270. Aspartate 68 acts as the Proton acceptor in catalysis.

This sequence belongs to the RNase Z family. RNase BN subfamily. In terms of assembly, homodimer. Requires Zn(2+) as cofactor.

Zinc phosphodiesterase, which has both exoribonuclease and endoribonuclease activities. This Escherichia coli O127:H6 (strain E2348/69 / EPEC) protein is Ribonuclease BN.